A 165-amino-acid chain; its full sequence is Pro-MCH (165 aa).

The N-terminal stretch at 1 to 21 is a signal peptide; it reads MAKMSLSSYLLILTFSLFSQG. The disordered stretch occupies residues 68–88; the sequence is NDDSSFMNDEENKNSKNTGSK. Residue I143 is modified to Isoleucine amide. C153 and C162 are oxidised to a cystine.

This sequence belongs to the melanin-concentrating hormone family. Pro-MCH is processed differentially in the brain and in peripheral organs producing two neuropeptides; NEI and MCH. A third peptide, NGE, may also be produced. Preferential processing in neurons by prohormone convertase 2 (PC2) generates NEI. MCH is generated in neurons of the lateral hypothalmic area by several prohormone convertases including PC1/3, PC2 and PC5/6.

It is found in the secreted. Its function is as follows. MCH may act as a neurotransmitter or neuromodulator in a broad array of neuronal functions directed toward the regulation of goal-directed behavior, such as food intake, and general arousal. The protein is Pro-MCH (PMCH) of Canis lupus familiaris (Dog).